Here is a 189-residue protein sequence, read N- to C-terminus: S-protein homolog 26 (189 aa).

A signal peptide spans 1–25; the sequence is MISMNRLSILLFVFAFGLTMMSNTA.

The protein belongs to the plant self-incompatibility (S1) protein family.

Its subcellular location is the secreted. In Arabidopsis thaliana (Mouse-ear cress), this protein is S-protein homolog 26.